The chain runs to 637 residues: tRNA 5-methylaminomethyl-2-thiouridine biosynthesis bifunctional protein MnmC (637 aa).

Residues 1–232 (MPERIEWLED…KRDNLQGEFN (232 aa)) form a tRNA (mnm(5)s(2)U34)-methyltransferase region. The FAD-dependent cmnm(5)s(2)U34 oxidoreductase stretch occupies residues 255 to 637 (IGAGLAGAAV…YGEAKLVSED (383 aa)).

This sequence in the N-terminal section; belongs to the methyltransferase superfamily. tRNA (mnm(5)s(2)U34)-methyltransferase family. It in the C-terminal section; belongs to the DAO family. FAD is required as a cofactor.

The protein resides in the cytoplasm. The enzyme catalyses 5-aminomethyl-2-thiouridine(34) in tRNA + S-adenosyl-L-methionine = 5-methylaminomethyl-2-thiouridine(34) in tRNA + S-adenosyl-L-homocysteine + H(+). Functionally, catalyzes the last two steps in the biosynthesis of 5-methylaminomethyl-2-thiouridine (mnm(5)s(2)U) at the wobble position (U34) in tRNA. Catalyzes the FAD-dependent demodification of cmnm(5)s(2)U34 to nm(5)s(2)U34, followed by the transfer of a methyl group from S-adenosyl-L-methionine to nm(5)s(2)U34, to form mnm(5)s(2)U34. This chain is tRNA 5-methylaminomethyl-2-thiouridine biosynthesis bifunctional protein MnmC, found in Polaromonas sp. (strain JS666 / ATCC BAA-500).